The chain runs to 356 residues: Inositol monophosphatase 3 (356 aa).

Residues 11–31 (LGIGVFCLLGLGVLYHVYSGF) form a helical membrane-spanning segment. Mg(2+) is bound by residues glutamate 127, aspartate 167, leucine 169, aspartate 170, and aspartate 293. Residue glutamate 127 coordinates substrate. Residues 169 to 172 (LDAT) and aspartate 293 each bind substrate.

This sequence belongs to the inositol monophosphatase superfamily. Mg(2+) serves as cofactor.

The protein localises to the membrane. The catalysed reaction is a myo-inositol phosphate + H2O = myo-inositol + phosphate. Its pathway is polyol metabolism; myo-inositol biosynthesis; myo-inositol from D-glucose 6-phosphate: step 2/2. This chain is Inositol monophosphatase 3 (bpnt2), found in Xenopus tropicalis (Western clawed frog).